A 393-amino-acid polypeptide reads, in one-letter code: MRILKSHPLLRLANSYIIDSPQPSNISYLWNFGSLLAFCLVIQIITGVTLAMHYNPSVLEAFNSVEHIMRDVNNGWLIRYLHANTASAFFFIVYLHMGRGLYYGSYRAPRTLVWTLGVIIFILMIVTAFLGYVLPYGQMSLWGATVITNLMSAIPWIGQDIVEFLWGGFSVNNATLNRFFALHFVLPFVLAALALMHLIALHDSAGSGNPLGVSGNFDRLPFAPYFIFKDLITIFLFILGLSIFVFFAPNILGDSENYVVANPMQTPPAIVPEWYLLPFYAILRSIPNKLLGVIAMFAAIVILLVMPFTDLGRSRGIQFRPLSKIAYYFFIANFLILMKLGAKHVESPFIEFGQISTVLYFSHFVIIVPLVSLIENTLVDLHLHNTLSLKNVF.

A run of 4 helical transmembrane segments spans residues 32–52, 76–98, 113–133, and 179–199; these read FGSLLAFCLVIQIITGVTLAM, WLIRYLHANTASAFFFIVYLHMG, VWTLGVIIFILMIVTAFLGYV, and FFALHFVLPFVLAALALMHLI. Heme b-binding residues include H82 and H96. H183 and H197 together coordinate heme b. A ubiquinone is bound at residue H202. 4 helical membrane-spanning segments follow: residues 226-246, 290-310, 322-342, and 349-369; these read FIFKDLITIFLFILGLSIFVF, LLGVIAMFAAIVILLVMPFTD, LSKIAYYFFIANFLILMKLGA, and FIEFGQISTVLYFSHFVIIVP.

The protein belongs to the cytochrome b family. As to quaternary structure, fungal cytochrome b-c1 complex contains 10 subunits; 3 respiratory subunits, 2 core proteins and 5 low-molecular weight proteins. Cytochrome b-c1 complex is a homodimer. Heme b is required as a cofactor.

The protein localises to the mitochondrion inner membrane. Its function is as follows. Component of the ubiquinol-cytochrome c reductase complex (complex III or cytochrome b-c1 complex) that is part of the mitochondrial respiratory chain. The b-c1 complex mediates electron transfer from ubiquinol to cytochrome c. Contributes to the generation of a proton gradient across the mitochondrial membrane that is then used for ATP synthesis. This is Cytochrome b (COB) from Venturia inaequalis (Apple scab fungus).